A 96-amino-acid chain; its full sequence is Pyrimidine/purine nucleoside phosphorylase (96 aa).

It belongs to the nucleoside phosphorylase PpnP family.

The catalysed reaction is a purine D-ribonucleoside + phosphate = a purine nucleobase + alpha-D-ribose 1-phosphate. It carries out the reaction adenosine + phosphate = alpha-D-ribose 1-phosphate + adenine. It catalyses the reaction cytidine + phosphate = cytosine + alpha-D-ribose 1-phosphate. The enzyme catalyses guanosine + phosphate = alpha-D-ribose 1-phosphate + guanine. The catalysed reaction is inosine + phosphate = alpha-D-ribose 1-phosphate + hypoxanthine. It carries out the reaction thymidine + phosphate = 2-deoxy-alpha-D-ribose 1-phosphate + thymine. It catalyses the reaction uridine + phosphate = alpha-D-ribose 1-phosphate + uracil. The enzyme catalyses xanthosine + phosphate = alpha-D-ribose 1-phosphate + xanthine. Functionally, catalyzes the phosphorolysis of diverse nucleosides, yielding D-ribose 1-phosphate and the respective free bases. Can use uridine, adenosine, guanosine, cytidine, thymidine, inosine and xanthosine as substrates. Also catalyzes the reverse reactions. In Serratia proteamaculans (strain 568), this protein is Pyrimidine/purine nucleoside phosphorylase.